Reading from the N-terminus, the 508-residue chain is Glutamyl-tRNA(Gln) amidotransferase subunit B, mitochondrial (508 aa).

This sequence belongs to the GatB/GatE family. GatB subfamily. Subunit of the heterotrimeric GatFAB amidotransferase (AdT) complex, composed of A, B and F subunits.

It localises to the mitochondrion. It carries out the reaction L-glutamyl-tRNA(Gln) + L-glutamine + ATP + H2O = L-glutaminyl-tRNA(Gln) + L-glutamate + ADP + phosphate + H(+). Functionally, allows the formation of correctly charged Gln-tRNA(Gln) through the transamidation of misacylated Glu-tRNA(Gln) in the mitochondria. The reaction takes place in the presence of glutamine and ATP through an activated gamma-phospho-Glu-tRNA(Gln). The sequence is that of Glutamyl-tRNA(Gln) amidotransferase subunit B, mitochondrial from Scheffersomyces stipitis (strain ATCC 58785 / CBS 6054 / NBRC 10063 / NRRL Y-11545) (Yeast).